The sequence spans 576 residues: Proline--tRNA ligase (576 aa).

Belongs to the class-II aminoacyl-tRNA synthetase family. ProS type 1 subfamily. As to quaternary structure, homodimer.

It is found in the cytoplasm. It catalyses the reaction tRNA(Pro) + L-proline + ATP = L-prolyl-tRNA(Pro) + AMP + diphosphate. Its function is as follows. Catalyzes the attachment of proline to tRNA(Pro) in a two-step reaction: proline is first activated by ATP to form Pro-AMP and then transferred to the acceptor end of tRNA(Pro). As ProRS can inadvertently accommodate and process non-cognate amino acids such as alanine and cysteine, to avoid such errors it has two additional distinct editing activities against alanine. One activity is designated as 'pretransfer' editing and involves the tRNA(Pro)-independent hydrolysis of activated Ala-AMP. The other activity is designated 'posttransfer' editing and involves deacylation of mischarged Ala-tRNA(Pro). The misacylated Cys-tRNA(Pro) is not edited by ProRS. The sequence is that of Proline--tRNA ligase from Leptospira borgpetersenii serovar Hardjo-bovis (strain JB197).